We begin with the raw amino-acid sequence, 201 residues long: Ubiquitin-conjugating enzyme E2 E2 (201 aa).

Basic and acidic residues predominate over residues 1–10 (MSTEAQRVDD). A disordered region spans residues 1 to 55 (MSTEAQRVDDSPSTSGGSSDGDQRESVQQEPDREQVQPKKKEGKISSKTAAKLST). Serine 2 bears the N-acetylserine mark. Phosphoserine occurs at positions 11, 15, 18, and 19. Positions 21-45 (GDQRESVQQEPDREQVQPKKKEGKI) are enriched in basic and acidic residues. Over residues 46–55 (SSKTAAKLST) the composition is skewed to low complexity. The UBC core domain occupies 55–201 (TSAKRIQKEL…ARQWTKRYAT (147 aa)). Cysteine 139 serves as the catalytic Glycyl thioester intermediate.

It belongs to the ubiquitin-conjugating enzyme family. Post-translationally, autoubiquitinated.

It catalyses the reaction S-ubiquitinyl-[E1 ubiquitin-activating enzyme]-L-cysteine + [E2 ubiquitin-conjugating enzyme]-L-cysteine = [E1 ubiquitin-activating enzyme]-L-cysteine + S-ubiquitinyl-[E2 ubiquitin-conjugating enzyme]-L-cysteine.. Its pathway is protein modification; protein ubiquitination. Functionally, accepts ubiquitin from the E1 complex and catalyzes its covalent attachment to other proteins. In vitro catalyzes 'Lys-11'- and 'Lys-48'-, as well as 'Lys-63'-linked polyubiquitination. Catalyzes the ISGylation of influenza A virus NS1 protein. The chain is Ubiquitin-conjugating enzyme E2 E2 (Ube2e2) from Mus musculus (Mouse).